A 147-amino-acid chain; its full sequence is D-aminoacyl-tRNA deacylase (147 aa).

Positions 136–137 match the Gly-cisPro motif, important for rejection of L-amino acids motif; the sequence is GP.

It belongs to the DTD family. As to quaternary structure, homodimer.

It is found in the cytoplasm. It carries out the reaction glycyl-tRNA(Ala) + H2O = tRNA(Ala) + glycine + H(+). The catalysed reaction is a D-aminoacyl-tRNA + H2O = a tRNA + a D-alpha-amino acid + H(+). In terms of biological role, an aminoacyl-tRNA editing enzyme that deacylates mischarged D-aminoacyl-tRNAs. Also deacylates mischarged glycyl-tRNA(Ala), protecting cells against glycine mischarging by AlaRS. Acts via tRNA-based rather than protein-based catalysis; rejects L-amino acids rather than detecting D-amino acids in the active site. By recycling D-aminoacyl-tRNA to D-amino acids and free tRNA molecules, this enzyme counteracts the toxicity associated with the formation of D-aminoacyl-tRNA entities in vivo and helps enforce protein L-homochirality. This is D-aminoacyl-tRNA deacylase from Streptococcus dysgalactiae subsp. equisimilis (Streptococcus equisimilis).